The chain runs to 576 residues: Flagellin B (576 aa).

It belongs to the bacterial flagellin family. Heteromer of FlaA and FlaB. Interacts with FliW. Interacts with FliS.

It localises to the secreted. The protein resides in the bacterial flagellum. Flagellin is the subunit protein which polymerizes to form the filaments of bacterial flagella. In Campylobacter jejuni subsp. jejuni serotype O:6 (strain 81116 / NCTC 11828), this protein is Flagellin B (flaB).